A 368-amino-acid polypeptide reads, in one-letter code: Multifunctional CCA protein (368 aa).

G8 and R11 together coordinate ATP. CTP-binding residues include G8 and R11. Mg(2+) contacts are provided by D21 and D23. ATP is bound by residues R91, R137, and R140. 3 residues coordinate CTP: R91, R137, and R140.

Belongs to the tRNA nucleotidyltransferase/poly(A) polymerase family. Bacterial CCA-adding enzyme type 1 subfamily. In terms of assembly, monomer. Can also form homodimers and oligomers. Mg(2+) is required as a cofactor. Requires Ni(2+) as cofactor.

It carries out the reaction a tRNA precursor + 2 CTP + ATP = a tRNA with a 3' CCA end + 3 diphosphate. The catalysed reaction is a tRNA with a 3' CCA end + 2 CTP + ATP = a tRNA with a 3' CCACCA end + 3 diphosphate. Functionally, catalyzes the addition and repair of the essential 3'-terminal CCA sequence in tRNAs without using a nucleic acid template. Adds these three nucleotides in the order of C, C, and A to the tRNA nucleotide-73, using CTP and ATP as substrates and producing inorganic pyrophosphate. tRNA 3'-terminal CCA addition is required both for tRNA processing and repair. Also involved in tRNA surveillance by mediating tandem CCA addition to generate a CCACCA at the 3' terminus of unstable tRNAs. While stable tRNAs receive only 3'-terminal CCA, unstable tRNAs are marked with CCACCA and rapidly degraded. The chain is Multifunctional CCA protein from Pseudomonas putida (strain ATCC 47054 / DSM 6125 / CFBP 8728 / NCIMB 11950 / KT2440).